The chain runs to 336 residues: Methionine synthase (336 aa).

His-210, Cys-212, Glu-234, and Cys-294 together coordinate Zn(2+).

It belongs to the archaeal MetE family. The cofactor is Zn(2+).

Its pathway is amino-acid biosynthesis; L-methionine biosynthesis via de novo pathway. Catalyzes the transfer of a methyl group to L-homocysteine resulting in methionine formation. The physiological methyl donor is unknown. This chain is Methionine synthase, found in Thermococcus kodakarensis (strain ATCC BAA-918 / JCM 12380 / KOD1) (Pyrococcus kodakaraensis (strain KOD1)).